The chain runs to 1328 residues: Protein turtle homolog B (1328 aa).

Positions 1–17 (MIWYVATLIASVISTRG) are cleaved as a signal peptide. The Extracellular segment spans residues 18–722 (LVAQGAHGLR…DLTDDGLARP (705 aa)). Ig-like domains are found at residues 30–115 (PEFV…ECKV), 139–226 (PTFT…LLVQ), 228–320 (PPFI…AYLT), 324–415 (PARV…ARLV), and 420–504 (PYFT…THLT). 2 disulfide bridges follow: C45-C113 and C161-C208. Residues N241 and N258 are each glycosylated (N-linked (GlcNAc...) asparagine). 3 disulfides stabilise this stretch: C250–C303, C346–C397, and C442–C488. Fibronectin type-III domains lie at 512–604 (APGS…TLAF) and 614–708 (LVTP…STDI). An N-linked (GlcNAc...) asparagine glycan is attached at N624. A helical transmembrane segment spans residues 723–743 (VLAGIVATICFLAAAILFSTL). The Cytoplasmic portion of the chain corresponds to 744–1328 (AACFVNKQRK…EPPTTLPTSG (585 aa)). Disordered stretches follow at residues 758–817 (RKKD…EKEL), 914–1040 (PMSS…PEPW), and 1106–1328 (KSPG…PTSG). Phosphoserine is present on residues S775, S783, and S794. Positions 990–1001 (SPLSSVMSSPPL) are enriched in low complexity. Polar residues-rich tracts occupy residues 1018–1033 (ENASNSTLPLTQTPTG), 1129–1141 (LVSQGQLRHTSQG), and 1199–1214 (SRLSPLTQSPLSSRTG). R1136 is modified (omega-N-methylarginine). Phosphoserine is present on residues S1207 and S1215. The span at 1246–1273 (SFSRKSTPSSTGSPSQSSRSGSPSYRPT) shows a compositional bias: low complexity. 2 stretches are compositionally biased toward pro residues: residues 1284-1295 (PSPPPGPAPPAP) and 1318-1328 (PEPPTTLPTSG).

It belongs to the immunoglobulin superfamily. Turtle family. In terms of assembly, found in a complex with MAGI2 and NLGN2, where it interacts with MAGI2 (via PDZ 5 and PDZ 6 domains). Post-translationally, N-glycosylated and sialylated. Not significantly O-glycosylated. As to expression, detected in brain.

Its subcellular location is the cell membrane. The protein resides in the postsynaptic cell membrane. The protein localises to the postsynaptic density. In terms of biological role, transmembrane protein which is abundantly expressed in interneurons, where it may regulate inhibitory synapse development. May mediate homophilic cell adhesion. This chain is Protein turtle homolog B, found in Mus musculus (Mouse).